Here is a 216-residue protein sequence, read N- to C-terminus: MVLRSQIPAHELALPDPARALPGRAEAMPVPAAHYVNGHPLKPPFPAGMRQALFGLGCFWGAERRFWQQPGVWTTAVGYAGGLTPNPTYEEVCSGLTGHTEVVLVVFDPQETDYRTLLKVFWEIHDPTQGMRQGNDIGTQYRSAIYCFDASQRASAEASRERFQAELAKAGYGPVTTEIADAPPFYYAEDYHQQYLAKNPGGYCGLGGTGVCLPPA.

Residue Cys58 is part of the active site.

It belongs to the MsrA Met sulfoxide reductase family.

The enzyme catalyses L-methionyl-[protein] + [thioredoxin]-disulfide + H2O = L-methionyl-(S)-S-oxide-[protein] + [thioredoxin]-dithiol. It catalyses the reaction [thioredoxin]-disulfide + L-methionine + H2O = L-methionine (S)-S-oxide + [thioredoxin]-dithiol. Its function is as follows. Has an important function as a repair enzyme for proteins that have been inactivated by oxidation. Catalyzes the reversible oxidation-reduction of methionine sulfoxide in proteins to methionine. This is Peptide methionine sulfoxide reductase MsrA from Azotobacter vinelandii (strain DJ / ATCC BAA-1303).